Here is a 162-residue protein sequence, read N- to C-terminus: D-aminoacyl-tRNA deacylase (162 aa).

Residues 145 to 146 (GP) carry the Gly-cisPro motif, important for rejection of L-amino acids motif.

It belongs to the DTD family. As to quaternary structure, homodimer.

It is found in the cytoplasm. The enzyme catalyses glycyl-tRNA(Ala) + H2O = tRNA(Ala) + glycine + H(+). The catalysed reaction is a D-aminoacyl-tRNA + H2O = a tRNA + a D-alpha-amino acid + H(+). In terms of biological role, an aminoacyl-tRNA editing enzyme that deacylates mischarged D-aminoacyl-tRNAs. Also deacylates mischarged glycyl-tRNA(Ala), protecting cells against glycine mischarging by AlaRS. Acts via tRNA-based rather than protein-based catalysis; rejects L-amino acids rather than detecting D-amino acids in the active site. By recycling D-aminoacyl-tRNA to D-amino acids and free tRNA molecules, this enzyme counteracts the toxicity associated with the formation of D-aminoacyl-tRNA entities in vivo and helps enforce protein L-homochirality. The chain is D-aminoacyl-tRNA deacylase from Bifidobacterium longum subsp. infantis (strain ATCC 15697 / DSM 20088 / JCM 1222 / NCTC 11817 / S12).